Consider the following 202-residue polypeptide: Elongation factor Ts, chloroplastic (202 aa).

This sequence belongs to the EF-Ts family.

The protein resides in the plastid. It localises to the chloroplast. Its function is as follows. Associates with the EF-Tu.GDP complex and induces the exchange of GDP to GTP. It remains bound to the aminoacyl-tRNA.EF-Tu.GTP complex up to the GTP hydrolysis stage on the ribosome. The protein is Elongation factor Ts, chloroplastic (tsf) of Phaeodactylum tricornutum (strain CCAP 1055/1).